A 417-amino-acid chain; its full sequence is Acetyltransferase nanB (417 aa).

The N-terminal stretch at 1-24 is a signal peptide; sequence MRPSTTTLSLLVFLISSILLATTG. Transmembrane regions (helical) follow at residues 150-170, 284-304, 307-327, 356-376, and 389-409; these read LAVS…LKNI, YLNN…FNWI, VQDG…GYFL, VGAL…VYPF, and FVDV…AAAL.

The protein belongs to the wax synthase family.

The protein localises to the membrane. It participates in secondary metabolite biosynthesis. Acetyltransferase; part of the gene cluster that mediates the biosynthesis of the benzazepine alkaloid nanangelenin A which contains an unprecedented 3,4-dihydro-1-benzazepine-2,5-dione-N-prenyl-N-acetoxy-anthranilamide scaffold. The first step of nanangelenin biosynthesis is catalyzed by the indoleamine 2,3-dioxygenase nanC which produces N-formyl-kynurenine through the catabolism of tryptophan. The two-module NRPS nanA then utilizes anthranilate (Ant) and L-kynurenine (L-Kyn) to assemble the dipeptide product nanangelenin B. The first adenylation domain of nanA (A1) loads anthranilate onto the T1 domain, while A2 loads kynurenine, generated through spontaneous nonenzymatic deformylation of the nanC-supplied N-formyl-kynurenine. The peptide bond formation between the tethered amino acids is catalyzed by the first condensation domain (C1) between anthranilate's carbonyl carbon and kynurenine's aliphatic primary amine. The second C domain (C2) catalyzes the final cyclization event between the aromatic amine of kynurenine and the tethered carbonyl carbon, yielding nanangelenin B. The terminal T3 domain enhances the catalytic efficiency of C2, suggesting the T2-tethered Ant-L-Kyn is transferred to T3 prior to cyclization by C2. Once released from nanA, nanangelenin B is then prenylated by the prenyltransferase nanD to form nanangelenin C. Nanangelenin C is then N-hydroxylated by the FAD-dependent monooxygenase nanF and further acetylated by the acetyltransferase nanB to yield nanangelenin F. Finally, the N-methyltransferase nanE methylates the amide nitrogen of 1-benzazepine to convert nanangelenin F into nanangelenin A. NanE is also able to methylate most of the intermediates of the pathway such as nanangelenin B and nanangelenin C to produce nanangelenin D and nanangelenin E, respectively. This Aspergillus nanangensis protein is Acetyltransferase nanB.